The following is a 170-amino-acid chain: ATP synthase subunit b (170 aa).

A helical transmembrane segment spans residues 15–37 (LNLFETNVLNWAVVVFGLYKFLP).

Belongs to the ATPase B chain family. F-type ATPases have 2 components, F(1) - the catalytic core - and F(0) - the membrane proton channel. F(1) has five subunits: alpha(3), beta(3), gamma(1), delta(1), epsilon(1). F(0) has four main subunits: a(1), b(1), b'(1) and c(10-14). The alpha and beta chains form an alternating ring which encloses part of the gamma chain. F(1) is attached to F(0) by a central stalk formed by the gamma and epsilon chains, while a peripheral stalk is formed by the delta, b and b' chains.

It is found in the cellular thylakoid membrane. In terms of biological role, f(1)F(0) ATP synthase produces ATP from ADP in the presence of a proton or sodium gradient. F-type ATPases consist of two structural domains, F(1) containing the extramembraneous catalytic core and F(0) containing the membrane proton channel, linked together by a central stalk and a peripheral stalk. During catalysis, ATP synthesis in the catalytic domain of F(1) is coupled via a rotary mechanism of the central stalk subunits to proton translocation. Component of the F(0) channel, it forms part of the peripheral stalk, linking F(1) to F(0). This Prochlorococcus marinus (strain MIT 9515) protein is ATP synthase subunit b.